We begin with the raw amino-acid sequence, 208 residues long: TM2 domain-containing protein 1 (208 aa).

Residues 1–37 form the signal peptide; sequence MAAAWPAGRASPAAGPPGLLRTLWLVTVAAGHCGAAA. Residues 38–129 are Extracellular-facing; the sequence is SGAVGGEETP…YSYKVAVALS (92 aa). 3 N-linked (GlcNAc...) asparagine glycosylation sites follow: Asn-73, Asn-76, and Asn-97. Residues 119–167 form the TM2 domain; it reads GYSYKVAVALSLFLGWLGADRFYLGYPALGLLKFCTVGFCGIGSLIDFI. A helical transmembrane segment spans residues 130-150; sequence LFLGWLGADRFYLGYPALGLL. The Cytoplasmic segment spans residues 151 to 154; that stretch reads KFCT. A helical transmembrane segment spans residues 155 to 175; it reads VGFCGIGSLIDFILISMQIVG. Topologically, residues 176–208 are extracellular; that stretch reads PSDGSSYIIDYYGTRLTRLSITNETFRKTQLYP. Residue Asn-198 is glycosylated (N-linked (GlcNAc...) asparagine).

It belongs to the TM2 family. Interacts with APP beta-APP42 (amyloid-beta protein 42). In terms of processing, N-glycosylated.

It localises to the membrane. Functionally, may participate in amyloid-beta-induced apoptosis via its interaction with beta-APP42. The chain is TM2 domain-containing protein 1 (Tm2d1) from Mus musculus (Mouse).